The sequence spans 118 residues: Small ribosomal subunit protein uS19c (118 aa).

A disordered region spans residues 92–118 (KKSSKKVTKNKKSIKKNIKTTSKKFKK).

It belongs to the universal ribosomal protein uS19 family.

It is found in the plastid. Its function is as follows. Protein S19 forms a complex with S13 that binds strongly to the 16S ribosomal RNA. In Euglena longa (Euglenophycean alga), this protein is Small ribosomal subunit protein uS19c (rps19).